The following is a 205-amino-acid chain: LexA repressor (205 aa).

The segment at residues 28–48 (RAEIAASLGFRSPNAAEEHLK) is a DNA-binding region (H-T-H motif). Catalysis depends on for autocatalytic cleavage activity residues Ser122 and Lys159.

The protein belongs to the peptidase S24 family. Homodimer.

The catalysed reaction is Hydrolysis of Ala-|-Gly bond in repressor LexA.. Functionally, represses a number of genes involved in the response to DNA damage (SOS response), including recA and lexA. Binds to the 16 bp palindromic sequence 5'-CTGTATATATATACAG-3'. In the presence of single-stranded DNA, RecA interacts with LexA causing an autocatalytic cleavage which disrupts the DNA-binding part of LexA, leading to derepression of the SOS regulon and eventually DNA repair. The polypeptide is LexA repressor (Providencia rettgeri).